We begin with the raw amino-acid sequence, 375 residues long: Chaperone protein DnaJ (375 aa).

The 66-residue stretch at 4–69 (DLYETLGVQK…QKRAAYDRYG (66 aa)) folds into the J domain. The segment at 133–211 (GKTAQIRVPT…CHGQGRVVEE (79 aa)) adopts a CR-type zinc-finger fold. 8 residues coordinate Zn(2+): Cys146, Cys149, Cys163, Cys166, Cys185, Cys188, Cys199, and Cys202. CXXCXGXG motif repeat units lie at residues 146-153 (CDVCTGTG), 163-170 (CGTCQGTG), 185-192 (CPTCGGRG), and 199-206 (CTKCHGQG).

This sequence belongs to the DnaJ family. In terms of assembly, homodimer. Zn(2+) serves as cofactor.

The protein localises to the cytoplasm. Participates actively in the response to hyperosmotic and heat shock by preventing the aggregation of stress-denatured proteins and by disaggregating proteins, also in an autonomous, DnaK-independent fashion. Unfolded proteins bind initially to DnaJ; upon interaction with the DnaJ-bound protein, DnaK hydrolyzes its bound ATP, resulting in the formation of a stable complex. GrpE releases ADP from DnaK; ATP binding to DnaK triggers the release of the substrate protein, thus completing the reaction cycle. Several rounds of ATP-dependent interactions between DnaJ, DnaK and GrpE are required for fully efficient folding. Also involved, together with DnaK and GrpE, in the DNA replication of plasmids through activation of initiation proteins. In Sinorhizobium medicae (strain WSM419) (Ensifer medicae), this protein is Chaperone protein DnaJ.